The chain runs to 159 residues: Ribosome maturation factor RimP (159 aa).

The protein belongs to the RimP family.

It is found in the cytoplasm. Functionally, required for maturation of 30S ribosomal subunits. This chain is Ribosome maturation factor RimP, found in Lacticaseibacillus casei (strain BL23) (Lactobacillus casei).